Reading from the N-terminus, the 173-residue chain is Ribulose bisphosphate carboxylase small subunit, chloroplastic 1 (173 aa).

The N-terminal 52 residues, 1–52 (MMVSTAAVARVRPAQTNMVGAFNGCRSSVAFPATRKANNDLSTLPSSGGRVS), are a transit peptide targeting the chloroplast.

This sequence belongs to the RuBisCO small chain family. In terms of assembly, heterohexadecamer of 8 large and 8 small subunits.

It is found in the plastid. It localises to the chloroplast. RuBisCO catalyzes two reactions: the carboxylation of D-ribulose 1,5-bisphosphate, the primary event in carbon dioxide fixation, as well as the oxidative fragmentation of the pentose substrate. Both reactions occur simultaneously and in competition at the same active site. Although the small subunit is not catalytic it is essential for maximal activity. In Lemna gibba (Swollen duckweed), this protein is Ribulose bisphosphate carboxylase small subunit, chloroplastic 1.